Here is a 726-residue protein sequence, read N- to C-terminus: MAQTVQNVTLSLTLPITCHICLGKVRQPVICINNHVFCSICIDLWLKNNSQCPACRVPITPENPCKEIIGGTSESEPMLSHTVRKHLRKTRLELLHKEYEDEIDCLQKEVEELKSKNLSLESQIKTILDPLTLVQGNQNEDKHLVTDNPSKINPETVAEWKKKLRTANEIYEKVKDDVDKLKEANKKLKLENGGLVRENLRLKAEVDNRSPQKFGRFAVAALQSKVEQYERETNRLKKALERSDKYIEELESQVAQLKNSSEEKEAMNSICQTALSADGKGSKGSEEDVVSKNQGDSARKQPGSSTSSSSHLAKPSSSRLCDTSSARQESTSKADLNCSKNKDLYQEQVEVMLDVTDTSMDTYLEREWGNKPSDCVPYKDEELYDLPAPCTPLSLSCLQLSTPENRESSVVQAGGSKKHSNHLRKLVFDDFCDSSNVSNKDSSEDDISRSENEKKSECFSSPKTGFWDCCSTSYAQNLDFESSEGNTIANSVGEISSKLSEKSGLCLSKRLNSIRSFEMNRTRTSSEASMDAAYLDKISELDSMMSESDNSKSPCNNGFKSLDLDGLSKSSQGSEFLEEPDKLEEKTELNLSKGSLTNDQLENGSEWKPTSFFLLSPSDQEMNEDFSLHSSSCPVTNEIKPPSCLFQTEFSQGILLSSSHRLFEDQRFGSSLFKMSSEMHSLHNHLQSPWSTSFVPEKRNKNVNQSTKRKIQSSLSSASPSKATKS.

The RING-type; degenerate zinc-finger motif lies at 18 to 56 (CHICLGKVRQPVICINNHVFCSICIDLWLKNNSQCPACR). 2 coiled-coil regions span residues 87–129 (LRKT…TILD) and 155–270 (ETVA…MNSI). Ser210 is modified (phosphoserine). 2 disordered regions span residues 276–334 (SADG…TSKA) and 436–460 (NVSN…ECFS). Residues 280-290 (KGSKGSEEDVV) show a composition bias toward basic and acidic residues. Residues 304–318 (SSTSSSSHLAKPSSS) are compositionally biased toward low complexity. Over residues 319 to 334 (RLCDTSSARQESTSKA) the composition is skewed to polar residues. The segment covering 446 to 457 (DISRSENEKKSE) has biased composition (basic and acidic residues). A phosphoserine mark is found at Ser526, Ser553, Ser561, Ser568, and Ser570. Disordered stretches follow at residues 570-602 (SSQG…DQLE) and 687-726 (QSPW…ATKS). Residues 579–588 (EPDKLEEKTE) show a composition bias toward basic and acidic residues. The segment covering 589–602 (LNLSKGSLTNDQLE) has biased composition (polar residues). Residues 713-726 (SSLSSASPSKATKS) are compositionally biased toward low complexity. Residues Ser719 and Ser721 each carry the phosphoserine modification.

As to quaternary structure, associates with ORC complex. Binds to chromatin; association is cell cycle-regulated, absent from mitotic chromosomes, is associated with chromatin from G1 and partially released from chromatin from mid S-phase. In terms of processing, auto-ubiquitinated.

The protein resides in the chromosome. The catalysed reaction is S-ubiquitinyl-[E2 ubiquitin-conjugating enzyme]-L-cysteine + [acceptor protein]-L-lysine = [E2 ubiquitin-conjugating enzyme]-L-cysteine + N(6)-ubiquitinyl-[acceptor protein]-L-lysine.. Functionally, E3 ubiquitin ligase essential for DNA replication origin activation during S phase. Acts as a replication origin selector which selects the origins to be fired and catalyzes the multi-mono-ubiquitination of a subset of chromatin-bound ORC3 and ORC5 during S-phase. The protein is ORC ubiquitin ligase 1 of Homo sapiens (Human).